The primary structure comprises 161 residues: Regulator of ribonuclease activity A (161 aa).

The protein belongs to the RraA family. In terms of assembly, homotrimer. Binds to both RNA-binding sites in the C-terminal region of Rne and to RhlB.

It is found in the cytoplasm. Globally modulates RNA abundance by binding to RNase E (Rne) and regulating its endonucleolytic activity. Can modulate Rne action in a substrate-dependent manner by altering the composition of the degradosome. Modulates RNA-binding and helicase activities of the degradosome. In Salmonella choleraesuis (strain SC-B67), this protein is Regulator of ribonuclease activity A.